The following is a 666-amino-acid chain: Endogenous retrovirus group K member 24 Gag polyprotein (666 aa).

Gly2 is lipidated: N-myristoyl glycine. Residues 165 to 264 (GKGPELVGPS…APPSRQGSEL (100 aa)) are disordered. Pro residues predominate over residues 232 to 247 (GMPPAPQGRAPYPQPP). 2 CCHC-type zinc fingers span residues 544–561 (GKCY…NCPV) and 580–597 (DLCP…QCRS). The interval 598 to 641 (KFDKNGQPLSGNEQRGQPQAPQQTGAFPIQPFVPQGFQGQQPPL) is disordered. Positions 604-622 (QPLSGNEQRGQPQAPQQTG) are enriched in polar residues. Positions 624–640 (FPIQPFVPQGFQGQQPP) are enriched in low complexity.

The protein belongs to the beta type-B retroviral Gag protein family. HERV class-II K(HML-2) gag subfamily. Myristoylation is essential for retroviral assembly. Alteration of the glycine residue leads to a block in the budding of particles and an accumulation of Gag inside the cell. In terms of processing, specific enzymatic cleavages may yield mature proteins.

The protein localises to the cell membrane. Functionally, the products of the Gag polyproteins of infectious retroviruses perform highly complex orchestrated tasks during the assembly, budding, maturation, and infection stages of the viral replication cycle. During viral assembly, the proteins form membrane associations and self-associations that ultimately result in budding of an immature virion from the infected cell. Gag precursors also function during viral assembly to selectively bind and package two plus strands of genomic RNA. Endogenous Gag proteins may have kept, lost or modified their original function during evolution. In Homo sapiens (Human), this protein is Endogenous retrovirus group K member 24 Gag polyprotein (ERVK-24).